The chain runs to 156 residues: Small ribosomal subunit protein uS7 (156 aa).

Belongs to the universal ribosomal protein uS7 family. As to quaternary structure, part of the 30S ribosomal subunit. Contacts proteins S9 and S11.

Its function is as follows. One of the primary rRNA binding proteins, it binds directly to 16S rRNA where it nucleates assembly of the head domain of the 30S subunit. Is located at the subunit interface close to the decoding center, probably blocks exit of the E-site tRNA. The chain is Small ribosomal subunit protein uS7 from Clostridium botulinum (strain Kyoto / Type A2).